A 357-amino-acid chain; its full sequence is Peptide chain release factor 1 (357 aa).

N5-methylglutamine is present on Gln233. The tract at residues 284–305 (RSASISADRKSQVGTGDRSERI) is disordered.

The protein belongs to the prokaryotic/mitochondrial release factor family. Post-translationally, methylated by PrmC. Methylation increases the termination efficiency of RF1.

Its subcellular location is the cytoplasm. Its function is as follows. Peptide chain release factor 1 directs the termination of translation in response to the peptide chain termination codons UAG and UAA. The polypeptide is Peptide chain release factor 1 (Clostridium novyi (strain NT)).